The sequence spans 309 residues: Thiamine-monophosphate kinase (309 aa).

Positions 41 and 55 each coordinate Mg(2+). His-62 is a binding site for substrate. The Mg(2+) site is built by Asp-83, Asp-128, and Asp-215. Position 127–128 (127–128) interacts with ATP; sequence GD. Ser-217 provides a ligand contact to ATP. Mg(2+) is bound at residue Asp-218. Residue Glu-268 coordinates substrate.

The protein belongs to the thiamine-monophosphate kinase family.

It catalyses the reaction thiamine phosphate + ATP = thiamine diphosphate + ADP. The protein operates within cofactor biosynthesis; thiamine diphosphate biosynthesis; thiamine diphosphate from thiamine phosphate: step 1/1. Its function is as follows. Catalyzes the ATP-dependent phosphorylation of thiamine-monophosphate (TMP) to form thiamine-pyrophosphate (TPP), the active form of vitamin B1. The chain is Thiamine-monophosphate kinase from Methanopyrus kandleri (strain AV19 / DSM 6324 / JCM 9639 / NBRC 100938).